We begin with the raw amino-acid sequence, 620 residues long: Membralin (620 aa).

The segment at 1–33 (MSEHVEPAAPGPGPNGGGGGPAPARGPRTPNLN) is disordered. Ser-2 is modified (N-acetylserine). Residues 22 to 31 (APARGPRTPN) show a composition bias toward low complexity. Thr-29 carries the post-translational modification Phosphothreonine. The chain crosses the membrane as a helical span at residues 70–90 (FFVLLKALFVLFVLAYIHIVF). N-linked (GlcNAc...) asparagine glycosylation is present at Asn-189. 3 helical membrane passes run 302–322 (TSYL…SMLL), 346–366 (IAFP…MEAI), and 426–446 (YSSL…IYFF). 2 disordered regions span residues 474-517 (TPTA…GPVA) and 568-620 (SPLG…EVGS). 2 stretches are compositionally biased toward low complexity: residues 499 to 517 (PPAL…GPVA) and 568 to 593 (SPLG…AASD).

It belongs to the membralin family. In terms of assembly, interacts with ERLIN2.

The protein localises to the endoplasmic reticulum membrane. Its function is as follows. May have a role in the ERAD pathway required for clearance of misfolded proteins in the endoplasmic reticulum (ER). Promotes survival of motor neurons, probably by protecting against ER stress. The sequence is that of Membralin (TMEM259) from Homo sapiens (Human).